The chain runs to 122 residues: Aspartate 1-decarboxylase (122 aa).

Ser25 serves as the catalytic Schiff-base intermediate with substrate; via pyruvic acid. At Ser25 the chain carries Pyruvic acid (Ser). Thr57 is a binding site for substrate. Residue Tyr58 is the Proton donor of the active site. Substrate is bound at residue 73–75; it reads GAA.

It belongs to the PanD family. As to quaternary structure, heterooctamer of four alpha and four beta subunits. Pyruvate serves as cofactor. In terms of processing, is synthesized initially as an inactive proenzyme, which is activated by self-cleavage at a specific serine bond to produce a beta-subunit with a hydroxyl group at its C-terminus and an alpha-subunit with a pyruvoyl group at its N-terminus.

It is found in the cytoplasm. The catalysed reaction is L-aspartate + H(+) = beta-alanine + CO2. It functions in the pathway cofactor biosynthesis; (R)-pantothenate biosynthesis; beta-alanine from L-aspartate: step 1/1. Functionally, catalyzes the pyruvoyl-dependent decarboxylation of aspartate to produce beta-alanine. The chain is Aspartate 1-decarboxylase from Bordetella avium (strain 197N).